Reading from the N-terminus, the 917-residue chain is MLX-interacting protein (917 aa).

The disordered stretch occupies residues 1–72 (MAADVFMCSP…AGPGREEPPR (72 aa)). Ala2 carries the N-acetylalanine modification. Ser9, Ser33, and Ser39 each carry phosphoserine. Positions 27–37 (PEDDDDSDTDE) are enriched in acidic residues. A compositionally biased stretch (low complexity) spans 47 to 57 (ATSARAHASAA). The segment at 73–327 (RQQIIHSGHF…PLQPNLDFMD (255 aa)) is required for cytoplasmic localization. The tract at residues 322–445 (NLDFMDTFEP…LLSPGPAPAP (124 aa)) is transactivation domain. Disordered regions lie at residues 347-402 (LPPP…CERT) and 632-711 (SHST…TDPK). Polar residues predominate over residues 378–388 (LPNSLITSSAA). Over residues 632-643 (SHSTSSQPSPVS) the composition is skewed to low complexity. Ser667 carries the phosphoserine modification. Residues 670–685 (VPATGSSRDCPNSGQA) are compositionally biased toward polar residues. Low complexity predominate over residues 686–704 (SPCPSEQSPSPQSPQNNCS). One can recognise a bHLH domain in the interval 717–767 (KNRQKHISAEQKRRFNIRMGFNTLNSLISNNSKQTSHAITLQKTMEYITKL). The leucine-zipper stretch occupies residues 767–788 (LQQERMQMQEEARRLREEIEEL). The segment at 830–879 (WKFWIFSMIIKPLFESFKGMVSTSSLEEFHRTALSWLDQHCSLPVLRPMV) is mediates heterotypic interactions between MLXIP and MLX and is required for cytoplasmic localization. The tract at residues 897–917 (SQLPEQASEAVTRMGKRSGES) is disordered.

In terms of assembly, efficient DNA binding requires dimerization with another bHLH protein. Binds DNA as a homodimer or a heterodimer with MLX/TCFL4.

It localises to the cytoplasm. The protein resides in the nucleus. It is found in the mitochondrion outer membrane. Binds DNA as a heterodimer with MLX/TCFL4 and activates transcription. Binds to the canonical E box sequence 5'-CACGTG-3'. Plays a role in transcriptional activation of glycolytic target genes. Involved in glucose-responsive gene regulation. Regulates transcription in response to changes in cellular carbohydrate abundance such as occurs during fasting to feeding metabolic transition. Refeeding stimulates MLXIPL/ChREBP transcription factor, leading to increased BCKDK to PPM1K expression ratio, phosphorylation and activation of ACLY that ultimately results in the generation of malonyl-CoA and oxaloacetate immediate substrates of de novo lipogenesis and gluconeogenesis, respectively. This Mus musculus (Mouse) protein is MLX-interacting protein.